Here is a 451-residue protein sequence, read N- to C-terminus: Protein FAM117A (451 aa).

The segment covering 1-25 has biased composition (gly residues); sequence MSGAAAGGRGGGSWGPGRGGAGGLR. Disordered regions lie at residues 1–83 and 164–183; these read MSGA…RPQP and RTKL…VQGD. A phosphoserine mark is found at S29 and S67. The stretch at 149 to 175 forms a coiled coil; sequence TDHRKEITKLKQQLQRTKLSRSGKEKE. S193 and S213 each carry phosphoserine. Positions 242–293 are disordered; that stretch reads DGHRAPAPPQNSSCDHSLLLEPGNLTSSPSVPLASPQPPSQASREEHQGATE. A phosphoserine mark is found at S318 and S326. T353 carries the post-translational modification Phosphothreonine. A disordered region spans residues 403 to 451; that stretch reads SPGSPLPTASPRAPRKGPEASKASSLPSEPWQRSPPSEESVLFQSSLVV. Phosphoserine is present on residues S412 and S426. Over residues 436–451 the composition is skewed to polar residues; it reads SPPSEESVLFQSSLVV.

Belongs to the FAM117 family.

The sequence is that of Protein FAM117A (Fam117a) from Mus musculus (Mouse).